The following is a 713-amino-acid chain: Phosphoribosylformylglycinamidine synthase subunit PurL (713 aa).

Residues 1 to 17 (MSLSPSDRELVTEELGR) show a composition bias toward basic and acidic residues. Positions 1–20 (MSLSPSDRELVTEELGREPT) are disordered. Histidine 34 is a catalytic residue. Tyrosine 37 lines the ATP pocket. Glutamate 85 serves as a coordination point for Mg(2+). Substrate-binding positions include 86–89 (SHNH) and arginine 108. The active-site Proton acceptor is the histidine 87. Aspartate 109 is a binding site for Mg(2+). Glutamine 233 is a substrate binding site. A Mg(2+)-binding site is contributed by aspartate 261. 305 to 307 (ESQ) lines the substrate pocket. Aspartate 480 and glycine 517 together coordinate ATP. Position 518 (asparagine 518) interacts with Mg(2+). Serine 520 serves as a coordination point for substrate.

It belongs to the FGAMS family. In terms of assembly, monomer. Part of the FGAM synthase complex composed of 1 PurL, 1 PurQ and 2 PurS subunits.

Its subcellular location is the cytoplasm. It catalyses the reaction N(2)-formyl-N(1)-(5-phospho-beta-D-ribosyl)glycinamide + L-glutamine + ATP + H2O = 2-formamido-N(1)-(5-O-phospho-beta-D-ribosyl)acetamidine + L-glutamate + ADP + phosphate + H(+). It functions in the pathway purine metabolism; IMP biosynthesis via de novo pathway; 5-amino-1-(5-phospho-D-ribosyl)imidazole from N(2)-formyl-N(1)-(5-phospho-D-ribosyl)glycinamide: step 1/2. Functionally, part of the phosphoribosylformylglycinamidine synthase complex involved in the purines biosynthetic pathway. Catalyzes the ATP-dependent conversion of formylglycinamide ribonucleotide (FGAR) and glutamine to yield formylglycinamidine ribonucleotide (FGAM) and glutamate. The FGAM synthase complex is composed of three subunits. PurQ produces an ammonia molecule by converting glutamine to glutamate. PurL transfers the ammonia molecule to FGAR to form FGAM in an ATP-dependent manner. PurS interacts with PurQ and PurL and is thought to assist in the transfer of the ammonia molecule from PurQ to PurL. This Natronomonas pharaonis (strain ATCC 35678 / DSM 2160 / CIP 103997 / JCM 8858 / NBRC 14720 / NCIMB 2260 / Gabara) (Halobacterium pharaonis) protein is Phosphoribosylformylglycinamidine synthase subunit PurL.